Reading from the N-terminus, the 367-residue chain is Germination protease (367 aa).

Positions 1 to 15 are excised as a propeptide; sequence MKEPLDLSKYSVRTD.

It belongs to the peptidase A25 family. As to quaternary structure, homotetramer. Post-translationally, autoproteolytically processed. The inactive tetrameric zymogen termed p46 autoprocesses to a smaller form termed p41, which is active only during spore germination.

The catalysed reaction is Endopeptidase action with P4 Glu or Asp, P1 preferably Glu &gt; Asp, P1' hydrophobic and P2' Ala.. Functionally, initiates the rapid degradation of small, acid-soluble proteins during spore germination. The sequence is that of Germination protease from Bacillus cereus (strain G9842).